The chain runs to 285 residues: Bifunctional protein FolD (285 aa).

NADP(+) contacts are provided by residues 165-167 (GRS) and Ser190.

The protein belongs to the tetrahydrofolate dehydrogenase/cyclohydrolase family. Homodimer.

It carries out the reaction (6R)-5,10-methylene-5,6,7,8-tetrahydrofolate + NADP(+) = (6R)-5,10-methenyltetrahydrofolate + NADPH. The enzyme catalyses (6R)-5,10-methenyltetrahydrofolate + H2O = (6R)-10-formyltetrahydrofolate + H(+). It participates in one-carbon metabolism; tetrahydrofolate interconversion. Its function is as follows. Catalyzes the oxidation of 5,10-methylenetetrahydrofolate to 5,10-methenyltetrahydrofolate and then the hydrolysis of 5,10-methenyltetrahydrofolate to 10-formyltetrahydrofolate. In Burkholderia multivorans (strain ATCC 17616 / 249), this protein is Bifunctional protein FolD.